A 214-amino-acid chain; its full sequence is GTP cyclohydrolase 1 (214 aa).

C108, H111, and C179 together coordinate Zn(2+).

This sequence belongs to the GTP cyclohydrolase I family. Toroid-shaped homodecamer, composed of two pentamers of five dimers.

The enzyme catalyses GTP + H2O = 7,8-dihydroneopterin 3'-triphosphate + formate + H(+). It functions in the pathway cofactor biosynthesis; 7,8-dihydroneopterin triphosphate biosynthesis; 7,8-dihydroneopterin triphosphate from GTP: step 1/1. The protein is GTP cyclohydrolase 1 of Shewanella loihica (strain ATCC BAA-1088 / PV-4).